The following is a 289-amino-acid chain: Glycerol facilitator-aquaporin gla (289 aa).

2 consecutive transmembrane segments (helical) span residues 10–30 and 41–61; these read ITEF…VANV and SWMI…VAFG. Residues 68 to 70 carry the NPA 1 motif; the sequence is NPA. The next 3 membrane-spanning stretches (helical) occupy residues 87–107, 151–171, and 209–229; these read AQYI…IVMV, FLGS…FFGS, and MIAH…LGGP. The NPA 2 motif lies at 235–237; that stretch reads NPA. The helical transmembrane segment at 264 to 284 threads the bilayer; it reads WYAWVPVLAPILASLAAVALF.

The protein belongs to the MIP/aquaporin (TC 1.A.8) family.

It localises to the cell membrane. Functionally, mixed channel protein that transports both water and glycerol. This is Glycerol facilitator-aquaporin gla (gla) from Lactococcus lactis subsp. cremoris (Streptococcus cremoris).